Reading from the N-terminus, the 308-residue chain is Glutathione synthetase (308 aa).

Residues 117–300 form the ATP-grasp domain; the sequence is KLLPLSFPKF…LERDCWDYFE (184 aa). ATP is bound at residue 143-198; that stretch reads YAEYGDIVLKPLYDYGGNGVCRICGRADVGAISSAMVERYEAPLVAQQFIDDISSD. Mg(2+) contacts are provided by Glu271 and Asn273.

Belongs to the prokaryotic GSH synthase family. It depends on Mg(2+) as a cofactor. Requires Mn(2+) as cofactor.

The enzyme catalyses gamma-L-glutamyl-L-cysteine + glycine + ATP = glutathione + ADP + phosphate + H(+). It participates in sulfur metabolism; glutathione biosynthesis; glutathione from L-cysteine and L-glutamate: step 2/2. The protein is Glutathione synthetase of Anaplasma centrale.